A 68-amino-acid chain; its full sequence is Large ribosomal subunit protein bL35 (68 aa).

The tract at residues 29–68 is disordered; that stretch reads GGVSHYNTKKSSKRKRQGRKPQYVPKNLEHKVKALLPNDV. Residues 35–47 show a composition bias toward basic residues; the sequence is NTKKSSKRKRQGR.

The protein belongs to the bacterial ribosomal protein bL35 family.

This Sulfurihydrogenibium sp. (strain YO3AOP1) protein is Large ribosomal subunit protein bL35.